The sequence spans 398 residues: Acetate kinase 1 (398 aa).

Asn10 contacts Mg(2+). Position 17 (Lys17) interacts with ATP. A substrate-binding site is contributed by Arg89. Asp146 acts as the Proton donor/acceptor in catalysis. Residues 206 to 210 (HLGNG), 281 to 283 (DCR), and 329 to 333 (GIGEN) each bind ATP. Glu384 provides a ligand contact to Mg(2+).

The protein belongs to the acetokinase family. Homodimer. Requires Mg(2+) as cofactor. It depends on Mn(2+) as a cofactor.

Its subcellular location is the cytoplasm. The enzyme catalyses acetate + ATP = acetyl phosphate + ADP. It functions in the pathway metabolic intermediate biosynthesis; acetyl-CoA biosynthesis; acetyl-CoA from acetate: step 1/2. Functionally, catalyzes the formation of acetyl phosphate from acetate and ATP. Can also catalyze the reverse reaction. The polypeptide is Acetate kinase 1 (Neisseria meningitidis serogroup A / serotype 4A (strain DSM 15465 / Z2491)).